The chain runs to 98 residues: Co-chaperonin GroES 1 (98 aa).

Belongs to the GroES chaperonin family. As to quaternary structure, heptamer of 7 subunits arranged in a ring. Interacts with the chaperonin GroEL.

It is found in the cytoplasm. Its function is as follows. Together with the chaperonin GroEL, plays an essential role in assisting protein folding. The GroEL-GroES system forms a nano-cage that allows encapsulation of the non-native substrate proteins and provides a physical environment optimized to promote and accelerate protein folding. GroES binds to the apical surface of the GroEL ring, thereby capping the opening of the GroEL channel. This Rhodopseudomonas palustris (strain ATCC BAA-98 / CGA009) protein is Co-chaperonin GroES 1.